The sequence spans 367 residues: Cyclin-D5-1 (367 aa).

The segment at 307 to 333 is disordered; that stretch reads QPTSPASKSTTTTTGKRSSSSSCSEST.

The protein belongs to the cyclin family. Cyclin D subfamily.

The polypeptide is Cyclin-D5-1 (CYCD5-1) (Oryza sativa subsp. japonica (Rice)).